The primary structure comprises 347 residues: NADH-ubiquinone oxidoreductase chain 2 (347 aa).

The next 11 membrane-spanning stretches (helical) occupy residues 3 to 23, 25 to 45, 59 to 79, 96 to 116, 122 to 142, 149 to 169, 178 to 198, 200 to 220, 237 to 257, 274 to 294, and 325 to 345; these read PVVL…VMTT, HWLL…PILM, YFLT…INLI, IIMT…FWVP, IQLS…MSIL, INLH…GWGG, IMAY…IYNP, MALL…MTFM, MPLL…LPPL, NSII…FFYM, and LLSP…MLAL.

The protein belongs to the complex I subunit 2 family. In terms of assembly, core subunit of respiratory chain NADH dehydrogenase (Complex I) which is composed of 45 different subunits. Interacts with TMEM242.

It is found in the mitochondrion inner membrane. The catalysed reaction is a ubiquinone + NADH + 5 H(+)(in) = a ubiquinol + NAD(+) + 4 H(+)(out). Functionally, core subunit of the mitochondrial membrane respiratory chain NADH dehydrogenase (Complex I) which catalyzes electron transfer from NADH through the respiratory chain, using ubiquinone as an electron acceptor. Essential for the catalytic activity and assembly of complex I. In Paranyctimene raptor (Unstriped tube-nosed fruit bat), this protein is NADH-ubiquinone oxidoreductase chain 2.